Reading from the N-terminus, the 507-residue chain is Phosphoenolpyruvate carboxylase (507 aa).

The interval 1 to 25 is disordered; sequence MHKIDRKIPNIMGTQHPDNAGVPFF.

Belongs to the PEPCase type 2 family. In terms of assembly, homotetramer. Requires Mg(2+) as cofactor.

The catalysed reaction is oxaloacetate + phosphate = phosphoenolpyruvate + hydrogencarbonate. In terms of biological role, catalyzes the irreversible beta-carboxylation of phosphoenolpyruvate (PEP) to form oxaloacetate (OAA), a four-carbon dicarboxylic acid source for the tricarboxylic acid cycle. The protein is Phosphoenolpyruvate carboxylase of Oenococcus oeni (strain ATCC BAA-331 / PSU-1).